A 357-amino-acid chain; its full sequence is Serpentine receptor class epsilon-30 (357 aa).

Helical transmembrane passes span 31–51 (IFEL…IFVM), 61–81 (LMFL…GKFI), 121–141 (LLIF…FGIL), 165–185 (IPII…LAII), 192–212 (FLAR…FLFI), 253–273 (LVVV…ALTF), and 283–303 (LIEN…MFSI).

Belongs to the nematode receptor-like protein sre family.

The protein localises to the membrane. The polypeptide is Serpentine receptor class epsilon-30 (sre-30) (Caenorhabditis elegans).